We begin with the raw amino-acid sequence, 549 residues long: Probable protein kinase UbiB (549 aa).

Positions 123-501 constitute a Protein kinase domain; it reads DFNETPLASA…QQQAHKSNYL (379 aa). Residues 129–137 and lysine 152 contribute to the ATP site; that span reads LASASISQV. Aspartate 287 acts as the Proton acceptor in catalysis. Transmembrane regions (helical) follow at residues 496–516 and 520–540; these read HKSNYLLITSAVLLICGTLLI and ATLWTPYVCLVSGIILWFVGW.

It belongs to the ABC1 family. UbiB subfamily.

Its subcellular location is the cell inner membrane. It functions in the pathway cofactor biosynthesis; ubiquinone biosynthesis [regulation]. In terms of biological role, is probably a protein kinase regulator of UbiI activity which is involved in aerobic coenzyme Q (ubiquinone) biosynthesis. The protein is Probable protein kinase UbiB of Shewanella baltica (strain OS185).